The sequence spans 60 residues: Small ribosomal subunit protein eS31 (60 aa).

Zn(2+) contacts are provided by C27, C30, C45, and C48. The C4-type zinc finger occupies C27–C48.

The protein belongs to the eukaryotic ribosomal protein eS31 family. As to quaternary structure, part of the 30S ribosomal subunit. It depends on Zn(2+) as a cofactor.

In Methanocaldococcus jannaschii (strain ATCC 43067 / DSM 2661 / JAL-1 / JCM 10045 / NBRC 100440) (Methanococcus jannaschii), this protein is Small ribosomal subunit protein eS31.